Consider the following 884-residue polypeptide: MSFLEDLELNFAECIQDGGKATLGVRQREEMDTTHCMKQNEIISQAVCALLNSGGGVVRVEIENGDYNFERDGVGLNLPPLFRNHLDEMLYGKLFLIYVSSWDVAASHVRLATLCSNLYHRCGTFTEVMDPEKALKFLKRVQDPRILGDSDSLNLQEAPVDDAQMILASDLFHSPQLQYLEKLNFTKSSHVEFQMFSADLSQGIRERLPKCVSALANSEGGYVFFGVHDETRHVIGCEKEKINCTNLKSTIDACIRKMPVYHFCGQNHKVQYELKFLEVYDKEALHGYVCAIKVERFCCAAFAKAPDSWEIKDNNKKPLTANDWASRMIEINPDLSSFPQMIPWKSMLNTTPCSKTVFTHKYLKCVEDLQKDYFPVSPNRITYTPESVYKDLFADYRGLRNLINMEMRCFSQGILIFSHSWAVDLGLQRRQDVICDALLISPNNVPILYTICNKWDLGNRHYSMKVARTLKQKLVNMGGYPGRLGIIPLVLPLGSHQRVRNDLEMPVYPESYNFITTQQVEALLQSLVIILFGFRPLLNEELNLESETVALLSDQQYGLLSTNLSKHREMFVHGLPGSGKTTLALMIVGKIRNVFNCQADNILYICENQSLKRFIVRKNVCQAVTRKTFMKNTFDNVQHIIVDEAQNFRTEDGNWYAKAKAITQRARDGPGVLYIFLDYFQINHLCCSGLPELQHQKPLLKLTRMLRSGDNITSYLQDIMHQIRENPPPNVPQEALMVGEELEWGPDVTGNLEITDNLNLEQMSVYVAEKCQSLWRSGYFTDVAVLFTRARDIEKCRDKLLLAMRRRSMSQLAEEPSLLVQVREGLDSLGSHVVLESVHRFSGMERSIVFGIIPMGSETAIFYNALLCLASRARTHLYIVKVVF.

G574–T581 provides a ligand contact to ATP.

This sequence belongs to the Schlafen family. Subgroup III subfamily.

May have a role in hematopoietic cell differentiation. This is Schlafen family member 5 (Slfn5) from Mus musculus (Mouse).